We begin with the raw amino-acid sequence, 300 residues long: Flaviolin linalyltransferase (300 aa).

Belongs to the aromatic prenyltransferase family. Monomer.

It carries out the reaction flaviolin + (2E)-geranyl diphosphate = 3-linalylflaviolin + diphosphate. Does not require magnesium or any other divalent metal ions for activity. Involved in the biosynthesis of furanonaphthoquinone I (FNQ I). Catalyzes C- and O-prenylations of different phenolic substrates. With flaviolin as substrate, catalyzes the formation of a carbon-carbon-bond between C-3 (rather than C-1) of geranyl diphosphate and C-3 of flaviolin. With 1,3-dihydroxynaphthalene and 4-hydroxybenzoate as substrates, catalyzes O-prenylations. The sequence is that of Flaviolin linalyltransferase from Streptomyces virginiae (Streptomyces cinnamonensis).